The following is a 520-amino-acid chain: BTB/POZ domain-containing protein At3g50780 (520 aa).

Residues 43-68 (SHNSLTKHKQSSPALQPPKPEKKPSS) form a disordered region. The BTB domain maps to 127–196 (AKVILVGKQG…MYCKDMKQRL (70 aa)).

The protein operates within protein modification; protein ubiquitination. In terms of biological role, may act as a substrate-specific adapter of an E3 ubiquitin-protein ligase complex (CUL3-RBX1-BTB) which mediates the ubiquitination and subsequent proteasomal degradation of target proteins. The sequence is that of BTB/POZ domain-containing protein At3g50780 from Arabidopsis thaliana (Mouse-ear cress).